The sequence spans 36 residues: MSDIN-like toxin proprotein 10 (36 aa).

The propeptide occupies 1–10 (MSDINATRLP). The segment at residues 11-19 (GAYPPVPMP) is a cross-link (cyclopeptide (Gly-Pro)). Positions 20–36 (CVGDADNFTLTRGENLC) are excised as a propeptide.

This sequence belongs to the MSDIN fungal toxin family. Processed by the macrocyclase-peptidase enzyme POPB to yield a toxic cyclic nonapeptide. POPB first removes 10 residues from the N-terminus. Conformational trapping of the remaining peptide forces the enzyme to release this intermediate rather than proceed to macrocyclization. The enzyme rebinds the remaining peptide in a different conformation and catalyzes macrocyclization of the N-terminal 9 residues.

Its function is as follows. Probable toxin that belongs to the MSDIN-like toxin family responsible for a large number of food poisoning cases and deaths. In Amanita bisporigera (Destroying angel), this protein is MSDIN-like toxin proprotein 10.